A 521-amino-acid chain; its full sequence is Bifunctional purine biosynthesis protein PurH (521 aa).

Residues 1 to 150 (MSEDRKAIKR…KNHPSVAVVT (150 aa)) enclose the MGS-like domain.

The protein belongs to the PurH family.

It catalyses the reaction (6R)-10-formyltetrahydrofolate + 5-amino-1-(5-phospho-beta-D-ribosyl)imidazole-4-carboxamide = 5-formamido-1-(5-phospho-D-ribosyl)imidazole-4-carboxamide + (6S)-5,6,7,8-tetrahydrofolate. The catalysed reaction is IMP + H2O = 5-formamido-1-(5-phospho-D-ribosyl)imidazole-4-carboxamide. Its pathway is purine metabolism; IMP biosynthesis via de novo pathway; 5-formamido-1-(5-phospho-D-ribosyl)imidazole-4-carboxamide from 5-amino-1-(5-phospho-D-ribosyl)imidazole-4-carboxamide (10-formyl THF route): step 1/1. It functions in the pathway purine metabolism; IMP biosynthesis via de novo pathway; IMP from 5-formamido-1-(5-phospho-D-ribosyl)imidazole-4-carboxamide: step 1/1. The chain is Bifunctional purine biosynthesis protein PurH from Corynebacterium efficiens (strain DSM 44549 / YS-314 / AJ 12310 / JCM 11189 / NBRC 100395).